A 457-amino-acid chain; its full sequence is 4-hydroxybenzoate transporter PcaK (457 aa).

The Cytoplasmic portion of the chain corresponds to 1 to 34 (MPKEANMASQDYATQRSSLDAQALINDAPLSRYQ). Residues 35–55 (WLIAIVCFLIVFVDGIDTAAM) traverse the membrane as a helical segment. Residues 56–72 (GFIAPALAQDWGVDRSQ) are Periplasmic-facing. Residues 73–93 (LGPVMSAALGGMIIGALVSGP) form a helical membrane-spanning segment. At 94-101 (TADRFGRK) the chain is on the cytoplasmic side. The helical transmembrane segment at 102–122 (IVLSMSMLVFGGFTLACAYST) threads the bilayer. The Periplasmic portion of the chain corresponds to 123 to 128 (NLDSLV). A helical membrane pass occupies residues 129–149 (IFRFLTGIGLGAAMPNATTLF). Residues 150 to 168 (SEYCPARIRSLLVTCMFCG) lie on the Cytoplasmic side of the membrane. A helical membrane pass occupies residues 169 to 189 (YNLGMAIGGFISSWLIPAFGW). Residues 190–191 (HS) are Periplasmic-facing. The helical transmembrane segment at 192-212 (LFLLGGWAPLILMLLVIFFLP) threads the bilayer. Topologically, residues 213–274 (ESYRFLIVKG…LFSAKYVKGT (62 aa)) are cytoplasmic. A helical transmembrane segment spans residues 275-295 (VLLWVTYFMGLVMIYLLTSWL). Residues 296–310 (PTLMRETGASLERAA) lie on the Periplasmic side of the membrane. Residues 311-331 (FLGGLFQFGGVLSALFIGWAM) form a helical membrane-spanning segment. Residues 332-338 (DRFNPNR) lie on the Cytoplasmic side of the membrane. The chain crosses the membrane as a helical span at residues 339-359 (IIAGFYLAAGIFAVIVGQSLS). Residues 360 to 363 (NPTL) lie on the Periplasmic side of the membrane. A helical transmembrane segment spans residues 364-384 (LALFILCAGIAVNGAQSSMPV). Topologically, residues 385 to 400 (LSARFYPTQCRATGVA) are cytoplasmic. The helical transmembrane segment at 401–421 (WMSGIGRFGAVFGAWIGAVLL) threads the bilayer. At 422-426 (GNNWS) the chain is on the periplasmic side. Residues 427–447 (FTMILSMLIIPAAAAAIAIFV) form a helical membrane-spanning segment. Residues 448 to 457 (KSLVAHTDAT) lie on the Cytoplasmic side of the membrane.

The protein belongs to the major facilitator superfamily. Aromatic acid:H(+) symporter (AAHS) (TC 2.A.1.15) family. Homotrimer.

The protein resides in the cell inner membrane. Its function is as follows. Uptake of 4-hydroxybenzoate (4-HB). Can also transport a variety of aromatic acids with hydroxyl substitutions at the 2-, 3- and 4-positions, such as salicylate, 2,4-dihydroxybenzoate, protocatechuate, 3-hydroxybenzoate, vanillate and gentisate. This Acinetobacter baylyi (strain ATCC 33305 / BD413 / ADP1) protein is 4-hydroxybenzoate transporter PcaK.